The sequence spans 307 residues: Fructokinase (307 aa).

Belongs to the carbohydrate kinase PfkB family.

It catalyses the reaction D-fructose + ATP = D-fructose 6-phosphate + ADP + H(+). Functionally, involved in sucrose metabolism. This chain is Fructokinase (scrK), found in Klebsiella pneumoniae.